The sequence spans 338 residues: Ketol-acid reductoisomerase (NADP(+)) (338 aa).

Positions 1 to 181 constitute a KARI N-terminal Rossmann domain; the sequence is MKVYYDKDAD…GGTRGGVIET (181 aa). Residues 24–27, Arg-47, and Ser-52 each bind NADP(+); that span reads YGSQ. Residue His-107 is part of the active site. Gly-133 is a binding site for NADP(+). In terms of domain architecture, KARI C-terminal knotted spans 182–327; sequence TFKEETETDL…SRLRDMMPWI (146 aa). Positions 190, 194, 226, and 230 each coordinate Mg(2+). Ser-251 contacts substrate.

The protein belongs to the ketol-acid reductoisomerase family. It depends on Mg(2+) as a cofactor.

The enzyme catalyses (2R)-2,3-dihydroxy-3-methylbutanoate + NADP(+) = (2S)-2-acetolactate + NADPH + H(+). It catalyses the reaction (2R,3R)-2,3-dihydroxy-3-methylpentanoate + NADP(+) = (S)-2-ethyl-2-hydroxy-3-oxobutanoate + NADPH + H(+). It participates in amino-acid biosynthesis; L-isoleucine biosynthesis; L-isoleucine from 2-oxobutanoate: step 2/4. The protein operates within amino-acid biosynthesis; L-valine biosynthesis; L-valine from pyruvate: step 2/4. Its function is as follows. Involved in the biosynthesis of branched-chain amino acids (BCAA). Catalyzes an alkyl-migration followed by a ketol-acid reduction of (S)-2-acetolactate (S2AL) to yield (R)-2,3-dihydroxy-isovalerate. In the isomerase reaction, S2AL is rearranged via a Mg-dependent methyl migration to produce 3-hydroxy-3-methyl-2-ketobutyrate (HMKB). In the reductase reaction, this 2-ketoacid undergoes a metal-dependent reduction by NADPH to yield (R)-2,3-dihydroxy-isovalerate. This Nitrosomonas eutropha (strain DSM 101675 / C91 / Nm57) protein is Ketol-acid reductoisomerase (NADP(+)).